Reading from the N-terminus, the 108-residue chain is UPF0060 membrane protein KPK_2870 (108 aa).

4 consecutive transmembrane segments (helical) span residues 6–26, 29–49, 61–81, and 86–106; these read LLFF…WLWL, GATP…VWLL, AAYG…VDGV, and YDWA…AGWG.

Belongs to the UPF0060 family.

The protein resides in the cell inner membrane. This chain is UPF0060 membrane protein KPK_2870, found in Klebsiella pneumoniae (strain 342).